The sequence spans 211 residues: Thymidylate kinase (211 aa).

Gly11 to Thr18 provides a ligand contact to ATP.

Belongs to the thymidylate kinase family.

The enzyme catalyses dTMP + ATP = dTDP + ADP. Phosphorylation of dTMP to form dTDP in both de novo and salvage pathways of dTTP synthesis. The chain is Thymidylate kinase from Streptococcus pyogenes serotype M3 (strain ATCC BAA-595 / MGAS315).